The primary structure comprises 223 residues: GTP cyclohydrolase 1 (223 aa).

Cysteine 114, histidine 117, and cysteine 185 together coordinate Zn(2+).

This sequence belongs to the GTP cyclohydrolase I family. Homomer.

The enzyme catalyses GTP + H2O = 7,8-dihydroneopterin 3'-triphosphate + formate + H(+). Its pathway is cofactor biosynthesis; 7,8-dihydroneopterin triphosphate biosynthesis; 7,8-dihydroneopterin triphosphate from GTP: step 1/1. The protein is GTP cyclohydrolase 1 of Chlorobium phaeovibrioides (strain DSM 265 / 1930) (Prosthecochloris vibrioformis (strain DSM 265)).